The following is a 731-amino-acid chain: Catalase-peroxidase (731 aa).

A disordered region spans residues 1–24 (MSTEPNCPFSGNARKHTAAGAPSN). A cross-link (tryptophyl-tyrosyl-methioninium (Trp-Tyr) (with M-245)) is located at residues 96 to 219 (WHSAGTYRVS…LGAVQMGLIY (124 aa)). Residue H97 is the Proton acceptor of the active site. A cross-link (tryptophyl-tyrosyl-methioninium (Tyr-Met) (with W-96)) is located at residues 219–245 (YVNPEGPNGNPDPIAAARDIRETFARM). H260 serves as a coordination point for heme b. A disordered region spans residues 339 to 365 (GAQQWKPKGDAGAGTVPDAHDPSKRHA).

Belongs to the peroxidase family. Peroxidase/catalase subfamily. In terms of assembly, homodimer or homotetramer. Heme b is required as a cofactor. Formation of the three residue Trp-Tyr-Met cross-link is important for the catalase, but not the peroxidase activity of the enzyme.

The catalysed reaction is H2O2 + AH2 = A + 2 H2O. It catalyses the reaction 2 H2O2 = O2 + 2 H2O. In terms of biological role, bifunctional enzyme with both catalase and broad-spectrum peroxidase activity. The sequence is that of Catalase-peroxidase from Polaromonas sp. (strain JS666 / ATCC BAA-500).